A 315-amino-acid polypeptide reads, in one-letter code: Porphobilinogen deaminase (315 aa).

Cysteine 241 is modified (S-(dipyrrolylmethanemethyl)cysteine).

It belongs to the HMBS family. In terms of assembly, monomer. Dipyrromethane serves as cofactor.

It carries out the reaction 4 porphobilinogen + H2O = hydroxymethylbilane + 4 NH4(+). The protein operates within porphyrin-containing compound metabolism; protoporphyrin-IX biosynthesis; coproporphyrinogen-III from 5-aminolevulinate: step 2/4. Tetrapolymerization of the monopyrrole PBG into the hydroxymethylbilane pre-uroporphyrinogen in several discrete steps. This Nitratidesulfovibrio vulgaris (strain ATCC 29579 / DSM 644 / CCUG 34227 / NCIMB 8303 / VKM B-1760 / Hildenborough) (Desulfovibrio vulgaris) protein is Porphobilinogen deaminase.